The following is a 188-amino-acid chain: dCTP deaminase (188 aa).

Residues Lys-111–Arg-116, Thr-135–Glu-137, Gln-156, Tyr-170, Lys-179, and Gln-180 each bind dCTP. The active-site Proton donor/acceptor is Glu-137.

The protein belongs to the dCTP deaminase family. In terms of assembly, homotrimer.

The enzyme catalyses dCTP + H2O + H(+) = dUTP + NH4(+). It participates in pyrimidine metabolism; dUMP biosynthesis; dUMP from dCTP (dUTP route): step 1/2. Its function is as follows. Catalyzes the deamination of dCTP to dUTP. In Rickettsia felis (strain ATCC VR-1525 / URRWXCal2) (Rickettsia azadi), this protein is dCTP deaminase.